We begin with the raw amino-acid sequence, 398 residues long: Palmitoyl-[acyl-carrier-protein] 4-desaturase 3, chloroplastic (398 aa).

A chloroplast-targeting transit peptide spans Met1–Arg29. The Fe cation site is built by Glu139, Glu177, His180, Glu230, Glu263, and His266.

Belongs to the fatty acid desaturase type 2 family. As to quaternary structure, homodimer. Fe(2+) serves as cofactor. In terms of tissue distribution, preferentially expressed in the flower labellum. Low expression in leaves.

The protein resides in the plastid. The protein localises to the chloroplast stroma. The enzyme catalyses hexadecanoyl-[ACP] + 2 reduced [2Fe-2S]-[ferredoxin] + O2 + 2 H(+) = (4Z)-hexadecenoyl-[ACP] + 2 oxidized [2Fe-2S]-[ferredoxin] + 2 H2O. The protein operates within lipid metabolism; fatty acid metabolism. In terms of biological role, converts palmitoyl-ACP to (4Z)-hexadec-4-enoyl-ACP by introduction of a cis double bond between carbons 4 and 5 of the acyl chain. This is Palmitoyl-[acyl-carrier-protein] 4-desaturase 3, chloroplastic (SAD3) from Ophrys arachnitiformis subsp. archipelagi (Orchid).